A 474-amino-acid chain; its full sequence is Methylenetetrahydrofolate--tRNA-(uracil-5-)-methyltransferase TrmFO (474 aa).

G14–G19 is a binding site for FAD.

The protein belongs to the MnmG family. TrmFO subfamily. FAD serves as cofactor.

The protein localises to the cytoplasm. The enzyme catalyses uridine(54) in tRNA + (6R)-5,10-methylene-5,6,7,8-tetrahydrofolate + NADH + H(+) = 5-methyluridine(54) in tRNA + (6S)-5,6,7,8-tetrahydrofolate + NAD(+). It carries out the reaction uridine(54) in tRNA + (6R)-5,10-methylene-5,6,7,8-tetrahydrofolate + NADPH + H(+) = 5-methyluridine(54) in tRNA + (6S)-5,6,7,8-tetrahydrofolate + NADP(+). Catalyzes the folate-dependent formation of 5-methyl-uridine at position 54 (M-5-U54) in all tRNAs. The polypeptide is Methylenetetrahydrofolate--tRNA-(uracil-5-)-methyltransferase TrmFO (Caulobacter vibrioides (strain ATCC 19089 / CIP 103742 / CB 15) (Caulobacter crescentus)).